Here is a 566-residue protein sequence, read N- to C-terminus: OTU domain-containing protein 5 (566 aa).

Disordered regions lie at residues 1 to 117 (MTIL…GDAL) and 146 to 175 (PGHS…GAGY). Positions 11 to 30 (PPDADPANEPPPPGPLPPAP) are enriched in pro residues. Positions 32-47 (RGGGVGVGGGGTGVGG) are enriched in gly residues. Pro residues predominate over residues 63–75 (ASPPPQGPLPGPP). Phosphoserine is present on Ser64. Residues 84-97 (AVPPGAVAGPRPQQ) show a composition bias toward low complexity. Gly residues predominate over residues 105–115 (GPGGPGGGPGD). A Phosphoserine modification is found at Ser165. Tyr175 carries the post-translational modification Phosphotyrosine. At Ser177 the chain carries Phosphoserine. Thr195 carries the post-translational modification Phosphothreonine. The region spanning 213-336 (FIIKQMKEDG…NIHYNSVVNP (124 aa)) is the OTU domain. The cys-loop stretch occupies residues 218–224 (MKEDGAC). Residue Asp221 is part of the active site. Cys224 acts as the Nucleophile in catalysis. The interval 273–283 (KRKNNCHGNHI) is variable-loop. A Phosphoserine modification is found at Ser323. Residues 324–329 (YHRNIH) are his-loop. Residue His329 is part of the active site. A phosphoserine mark is found at Ser332 and Ser370. The disordered stretch occupies residues 413-497 (ARQVRGPSQP…PGTSSQFSAG (85 aa)). Low complexity-rich tracts occupy residues 425–438 (ASAT…AASS) and 445–457 (SRSP…ASSP). Ser447 carries the post-translational modification Phosphoserine. At Thr502 the chain carries Phosphothreonine. Ser503 bears the Phosphoserine mark.

This sequence belongs to the peptidase C85 family. In terms of assembly, interacts with TRAF3. Post-translationally, phosphorylation at Ser-177 is required for deubiquitinating activity. Phosphorylation at Ser-323, Ser-332 and Ser-503 by MTOR promotes its activity.

It localises to the nucleus. The enzyme catalyses Thiol-dependent hydrolysis of ester, thioester, amide, peptide and isopeptide bonds formed by the C-terminal Gly of ubiquitin (a 76-residue protein attached to proteins as an intracellular targeting signal).. Its activity is regulated as follows. Inhibited by N-ethyl-maleimide (NEM). Deubiquitinating enzyme that functions as a negative regulator of the innate immune system. Has peptidase activity towards 'Lys-48'- and 'Lys-63'-linked polyubiquitin chains. Can also cleave 'Lys-11'-linked ubiquitin chains (in vitro). Acts via TRAF3 deubiquitination and subsequent suppression of type I interferon (IFN) production. Controls neuroectodermal differentiation through cleaving 'Lys-48'-linked ubiquitin chains to counteract degradation of select chromatin regulators such as ARID1A, HDAC2 and HCF1. Acts as a positive regulator of mTORC1 and mTORC2 signaling following phosphorylation by MTOR: acts by mediating deubiquitination of BTRC, leading to its stability. This chain is OTU domain-containing protein 5, found in Rattus norvegicus (Rat).